Here is a 101-residue protein sequence, read N- to C-terminus: uncharacterized protein (101 aa).

An N-terminal signal peptide occupies residues 1–19 (MKFKYLSTPLLFSALLFSA). The N-palmitoyl cysteine moiety is linked to residue Cys-20. Cys-20 is lipidated: S-diacylglycerol cysteine.

Belongs to the MG439/MG440 family.

The protein localises to the cell membrane. This is an uncharacterized protein from Mycoplasma pneumoniae (strain ATCC 29342 / M129 / Subtype 1) (Mycoplasmoides pneumoniae).